A 232-amino-acid polypeptide reads, in one-letter code: Orotate phosphoribosyltransferase (232 aa).

5-phospho-alpha-D-ribose 1-diphosphate-binding positions include R107, K108, K111, and 133–141 (EDLTTDGGS). T137 lines the orotate pocket.

This sequence belongs to the purine/pyrimidine phosphoribosyltransferase family. PyrE subfamily. In terms of assembly, homodimer. Mg(2+) serves as cofactor.

It catalyses the reaction orotidine 5'-phosphate + diphosphate = orotate + 5-phospho-alpha-D-ribose 1-diphosphate. It functions in the pathway pyrimidine metabolism; UMP biosynthesis via de novo pathway; UMP from orotate: step 1/2. Its function is as follows. Catalyzes the transfer of a ribosyl phosphate group from 5-phosphoribose 1-diphosphate to orotate, leading to the formation of orotidine monophosphate (OMP). The protein is Orotate phosphoribosyltransferase of Cereibacter sphaeroides (strain KD131 / KCTC 12085) (Rhodobacter sphaeroides).